Reading from the N-terminus, the 214-residue chain is Cytochrome b (214 aa).

Helical transmembrane passes span 31–51 (FGSM…FLAI), 75–96 (WIMQ…YIHI), 111–131 (WLSG…GYVL), and 176–196 (FFAL…IHII). Residues His-81 and His-95 each contribute to the heme b site. His-180 and His-194 together coordinate heme b. His-199 is an a ubiquinone binding site.

It belongs to the cytochrome b family. The cytochrome bc1 complex contains 3 respiratory subunits (MT-CYB, CYC1 and UQCRFS1), 2 core proteins (UQCRC1 and UQCRC2) and probably 6 low-molecular weight proteins. Heme b serves as cofactor.

It is found in the mitochondrion inner membrane. Its function is as follows. Component of the ubiquinol-cytochrome c reductase complex (complex III or cytochrome b-c1 complex) that is part of the mitochondrial respiratory chain. The b-c1 complex mediates electron transfer from ubiquinol to cytochrome c. Contributes to the generation of a proton gradient across the mitochondrial membrane that is then used for ATP synthesis. This Atractaspis micropholis (Mole viper) protein is Cytochrome b (MT-CYB).